Consider the following 316-residue polypeptide: Homoserine kinase (316 aa).

Position 97-107 (97-107 (PPARGLGSSAS)) interacts with ATP.

The protein belongs to the GHMP kinase family. Homoserine kinase subfamily.

Its subcellular location is the cytoplasm. It catalyses the reaction L-homoserine + ATP = O-phospho-L-homoserine + ADP + H(+). Its pathway is amino-acid biosynthesis; L-threonine biosynthesis; L-threonine from L-aspartate: step 4/5. Catalyzes the ATP-dependent phosphorylation of L-homoserine to L-homoserine phosphate. This Prochlorococcus marinus (strain MIT 9313) protein is Homoserine kinase.